Consider the following 318-residue polypeptide: MEKLNLVSLPHFVSVENLSAEEVEALINRAEYFKNGGATPRLTQPVYISNMFFEDSSRTHTSFEMAERKLGLTVIPFDPAHSSVNKGETLYDTSLIMDAVGVNIEVIRHSQNEYYQDLIHPKKHQHLNIGVINAGDGSGQHPSQCLLDMMTIHEHFGHFKGLKVAIVGDITNSRVAKSNMELLTRLGAEVYFSGPEYWYSSEYDKYGKYEKLDKLIPEMDVMMLLRVQHERHSDDPNEKNFDAQAYHEEYGINHKRYQELKPDTIIMHPGPINHDVELSGDLVESDKCMFTRQMQNGVFMRMAMIEAVLRGRKLGGLN.

The carbamoyl phosphate site is built by R58 and T59. K86 is an L-aspartate binding site. Residues R108, H141, and Q144 each coordinate carbamoyl phosphate. R174 and R226 together coordinate L-aspartate. 2 residues coordinate carbamoyl phosphate: G270 and P271.

The protein belongs to the aspartate/ornithine carbamoyltransferase superfamily. ATCase family. In terms of assembly, heterododecamer (2C3:3R2) of six catalytic PyrB chains organized as two trimers (C3), and six regulatory PyrI chains organized as three dimers (R2).

The catalysed reaction is carbamoyl phosphate + L-aspartate = N-carbamoyl-L-aspartate + phosphate + H(+). It participates in pyrimidine metabolism; UMP biosynthesis via de novo pathway; (S)-dihydroorotate from bicarbonate: step 2/3. Its function is as follows. Catalyzes the condensation of carbamoyl phosphate and aspartate to form carbamoyl aspartate and inorganic phosphate, the committed step in the de novo pyrimidine nucleotide biosynthesis pathway. The protein is Aspartate carbamoyltransferase catalytic subunit of Lactobacillus gasseri (strain ATCC 33323 / DSM 20243 / BCRC 14619 / CIP 102991 / JCM 1131 / KCTC 3163 / NCIMB 11718 / NCTC 13722 / AM63).